The primary structure comprises 330 residues: Malate dehydrogenase (330 aa).

13–19 (GAAGQIG) contributes to the NAD(+) binding site. Substrate-binding residues include arginine 94 and arginine 100. NAD(+) contacts are provided by residues asparagine 107, glutamine 114, and 131–133 (VGN). Substrate-binding residues include asparagine 133 and arginine 164. Histidine 189 functions as the Proton acceptor in the catalytic mechanism.

Belongs to the LDH/MDH superfamily. MDH type 2 family.

The enzyme catalyses (S)-malate + NAD(+) = oxaloacetate + NADH + H(+). Its function is as follows. Catalyzes the reversible oxidation of malate to oxaloacetate. The protein is Malate dehydrogenase of Deinococcus deserti (strain DSM 17065 / CIP 109153 / LMG 22923 / VCD115).